A 430-amino-acid polypeptide reads, in one-letter code: Adenylosuccinate synthetase (430 aa).

Residues 12–18 and 40–42 each bind GTP; these read GDEGKGK and GHT. Asp-13 acts as the Proton acceptor in catalysis. Mg(2+) is bound by residues Asp-13 and Gly-40. Residues 13 to 16, 38 to 41, Thr-130, Arg-144, Gln-224, Thr-239, and Arg-303 contribute to the IMP site; these read DEGK and NAGH. His-41 (proton donor) is an active-site residue. 299–305 is a substrate binding site; it reads TVTGRKR. GTP is bound by residues Arg-305, 331 to 333, and 413 to 415; these read KLD and STS.

Belongs to the adenylosuccinate synthetase family. In terms of assembly, homodimer. Requires Mg(2+) as cofactor.

It is found in the cytoplasm. The enzyme catalyses IMP + L-aspartate + GTP = N(6)-(1,2-dicarboxyethyl)-AMP + GDP + phosphate + 2 H(+). Its pathway is purine metabolism; AMP biosynthesis via de novo pathway; AMP from IMP: step 1/2. In terms of biological role, plays an important role in the de novo pathway of purine nucleotide biosynthesis. Catalyzes the first committed step in the biosynthesis of AMP from IMP. This Cereibacter sphaeroides (strain KD131 / KCTC 12085) (Rhodobacter sphaeroides) protein is Adenylosuccinate synthetase.